The chain runs to 361 residues: POU domain, class 3, transcription factor 4 (361 aa).

Disordered regions lie at residues 99 to 131 and 144 to 192; these read PHVA…GQPL and MLEH…PTSD. Residues 119-131 are compositionally biased toward polar residues; it reads APNSSITSSGQPL. The segment covering 165 to 183 has biased composition (basic and acidic residues); sequence VLREPPDHGELGSHHCQDH. The POU-specific domain maps to 186 to 260; that stretch reads EETPTSDELE…LLNKWLEEAD (75 aa). The residue at position 265 (Ser-265) is a Phosphoserine. Positions 278–337 form a DNA-binding region, homeobox; the sequence is KRKKRTSIEVSVKGVLETHFLKCPKPAAQEISSLADSLQLEKEVVRVWFCNRRQKEKRMT. Positions 334 to 361 are disordered; it reads KRMTPPGDQQPHEVYSHTVKTDASCHDL. Positions 343–361 are enriched in basic and acidic residues; it reads QPHEVYSHTVKTDASCHDL.

This sequence belongs to the POU transcription factor family. Class-3 subfamily. In terms of assembly, interacts with HNRNPU. In terms of tissue distribution, brain specific.

Its subcellular location is the nucleus. Its function is as follows. Probable transcription factor which exert its primary action widely during early neural development and in a very limited set of neurons in the mature brain. The chain is POU domain, class 3, transcription factor 4 (Pou3f4) from Mus musculus (Mouse).